The chain runs to 579 residues: 2-succinyl-5-enolpyruvyl-6-hydroxy-3-cyclohexene-1-carboxylate synthase (579 aa).

This sequence belongs to the TPP enzyme family. MenD subfamily. As to quaternary structure, homodimer. Mg(2+) is required as a cofactor. Requires Mn(2+) as cofactor. It depends on thiamine diphosphate as a cofactor.

The enzyme catalyses isochorismate + 2-oxoglutarate + H(+) = 5-enolpyruvoyl-6-hydroxy-2-succinyl-cyclohex-3-ene-1-carboxylate + CO2. Its pathway is quinol/quinone metabolism; 1,4-dihydroxy-2-naphthoate biosynthesis; 1,4-dihydroxy-2-naphthoate from chorismate: step 2/7. It functions in the pathway quinol/quinone metabolism; menaquinone biosynthesis. In terms of biological role, catalyzes the thiamine diphosphate-dependent decarboxylation of 2-oxoglutarate and the subsequent addition of the resulting succinic semialdehyde-thiamine pyrophosphate anion to isochorismate to yield 2-succinyl-5-enolpyruvyl-6-hydroxy-3-cyclohexene-1-carboxylate (SEPHCHC). The chain is 2-succinyl-5-enolpyruvyl-6-hydroxy-3-cyclohexene-1-carboxylate synthase from Oceanobacillus iheyensis (strain DSM 14371 / CIP 107618 / JCM 11309 / KCTC 3954 / HTE831).